The following is a 353-amino-acid chain: Lactosylceramide 4-alpha-galactosyltransferase (353 aa).

The Cytoplasmic portion of the chain corresponds to 1–22 (MSKPPDLLLRLLRGAPRQRVCT). A helical; Signal-anchor for type II membrane protein transmembrane segment spans residues 23-43 (LFIIGFKFTFFVSIMIYWHVV). Topologically, residues 44-353 (GEPKEKGQLY…TTHEAMKMYL (310 aa)) are lumenal. The N-linked (GlcNAc...) asparagine glycan is linked to asparagine 121. Positions 192-194 (DTD) match the DXD motif motif. Asparagine 203 carries an N-linked (GlcNAc...) asparagine glycan.

The protein belongs to the glycosyltransferase 32 family.

It is found in the golgi apparatus membrane. The enzyme catalyses a beta-D-Gal-(1-&gt;4)-beta-D-Glc-(1&lt;-&gt;1)-Cer(d18:1(4E)) + UDP-alpha-D-galactose = a globoside Gb3Cer (d18:1(4E)) + UDP + H(+). It carries out the reaction a beta-D-Gal-(1&lt;-&gt;1')-ceramide + UDP-alpha-D-galactose = alpha-D-Gal-(1-&gt;4)-beta-D-Gal-(1&lt;-&gt;1')-Cer + UDP + H(+). Its pathway is glycolipid biosynthesis. In terms of biological role, catalyzes the transfer of galactose from UDP-alpha-D-galactose to lactosylceramide/beta-D-galactosyl-(1-&gt;4)-beta-D-glucosyl-(1&lt;-&gt;1)-ceramide(d18:1(4E)) to produce globotriaosylceramide/globoside Gb3Cer (d18:1(4E)). Also able to transfer galactose to galactosylceramide/beta-D-Gal-(1&lt;-&gt;1')-Cer. Globoside Gb3Cer is a glycosphingolipid of the globo serie, one of the major types of neutral root structures of glycosphingolipids, that constitute a significant portion of mammalian cell membranes. In Pan troglodytes (Chimpanzee), this protein is Lactosylceramide 4-alpha-galactosyltransferase (A4GALT).